The chain runs to 259 residues: Flagellar brake protein YcgR (259 aa).

The PilZ domain occupies 129–246 (QRREFYRLQT…DNAIQRYIFK (118 aa)).

Belongs to the YcgR family. As to quaternary structure, monomer. Interacts with the flagellar basal bodies.

It is found in the bacterial flagellum basal body. Its function is as follows. Acts as a flagellar brake, regulating swimming and swarming in a bis-(3'-5') cyclic diguanylic acid (c-di-GMP)-dependent manner. Binds 1 c-di-GMP dimer per subunit. Increasing levels of c-di-GMP lead to decreased motility. The sequence is that of Flagellar brake protein YcgR from Azoarcus sp. (strain BH72).